A 1097-amino-acid chain; its full sequence is DNA-directed RNA polymerase subunit beta (1097 aa).

The tract at residues 1072 to 1097 (QDVNPRRSTPSRPTYESLGVADYDED) is disordered.

Belongs to the RNA polymerase beta chain family. In terms of assembly, in cyanobacteria the RNAP catalytic core is composed of 2 alpha, 1 beta, 1 beta', 1 gamma and 1 omega subunit. When a sigma factor is associated with the core the holoenzyme is formed, which can initiate transcription.

The enzyme catalyses RNA(n) + a ribonucleoside 5'-triphosphate = RNA(n+1) + diphosphate. Its function is as follows. DNA-dependent RNA polymerase catalyzes the transcription of DNA into RNA using the four ribonucleoside triphosphates as substrates. In Parasynechococcus marenigrum (strain WH8102), this protein is DNA-directed RNA polymerase subunit beta.